A 752-amino-acid chain; its full sequence is Photosystem I P700 chlorophyll a apoprotein A1 (752 aa).

Helical transmembrane passes span isoleucine 73 to alanine 96, leucine 159 to histidine 182, methionine 198 to leucine 222, threonine 294 to tyrosine 312, tryptophan 349 to tyrosine 372, leucine 388 to valine 414, alanine 436 to histidine 458, and phenylalanine 533 to leucine 551. [4Fe-4S] cluster is bound by residues cysteine 575 and cysteine 584. 2 helical membrane passes run histidine 591 to tryptophan 612 and leucine 666 to phenylalanine 688. A chlorophyll a'-binding site is contributed by histidine 677. Positions 685 and 693 each coordinate chlorophyll a. A phylloquinone-binding site is contributed by tryptophan 694. The helical transmembrane segment at alanine 726–alanine 746 threads the bilayer.

Belongs to the PsaA/PsaB family. In terms of assembly, the PsaA/B heterodimer binds the P700 chlorophyll special pair and subsequent electron acceptors. PSI consists of a core antenna complex that captures photons, and an electron transfer chain that converts photonic excitation into a charge separation. The eukaryotic PSI reaction center is composed of at least 11 subunits. P700 is a chlorophyll a/chlorophyll a' dimer, A0 is one or more chlorophyll a, A1 is one or both phylloquinones and FX is a shared 4Fe-4S iron-sulfur center. is required as a cofactor.

It is found in the plastid. It localises to the chloroplast thylakoid membrane. The enzyme catalyses reduced [plastocyanin] + hnu + oxidized [2Fe-2S]-[ferredoxin] = oxidized [plastocyanin] + reduced [2Fe-2S]-[ferredoxin]. Its function is as follows. PsaA and PsaB bind P700, the primary electron donor of photosystem I (PSI), as well as the electron acceptors A0, A1 and FX. PSI is a plastocyanin/cytochrome c6-ferredoxin oxidoreductase, converting photonic excitation into a charge separation, which transfers an electron from the donor P700 chlorophyll pair to the spectroscopically characterized acceptors A0, A1, FX, FA and FB in turn. Oxidized P700 is reduced on the lumenal side of the thylakoid membrane by plastocyanin or cytochrome c6. The chain is Photosystem I P700 chlorophyll a apoprotein A1 from Emiliania huxleyi (Coccolithophore).